We begin with the raw amino-acid sequence, 361 residues long: G-protein coupled receptor 183 (361 aa).

The Extracellular segment spans residues 1–31; the sequence is MDIQMANNFTPPSATPQGNDCDLYAHHSTAR. Residues 32–57 form a helical membrane-spanning segment; sequence IVMPLHYSLVFIIGLVGNLLALVVIV. Over 58 to 77 the chain is Cytoplasmic; it reads QNRKKINSTTLYSTNLVISD. A helical membrane pass occupies residues 78 to 95; the sequence is ILFTTALPTRIAYYAMGF. 7alpha,25-dihydroxycholesterol is bound at residue Arg-87. Residues 96 to 105 lie on the Extracellular side of the membrane; that stretch reads DWRIGDALCR. Cys-104 and Cys-181 are disulfide-bonded. A helical membrane pass occupies residues 106-127; it reads ITALVFYINTYAGVNFMTCLSI. The 7alpha,25-dihydroxycholesterol site is built by Tyr-112 and Tyr-116. Residues 126-134 form an interaction with G proteins region; it reads SIDRFIAVV. Topologically, residues 128–149 are cytoplasmic; the sequence is DRFIAVVHPLRYNKIKRIEHAK. A helical transmembrane segment spans residues 150–168; it reads GVCIFVWILVFAQTLPLLI. Over 169–192 the chain is Extracellular; that stretch reads NPMSKQEAERITCMEYPNFEETKS. Residues 193-215 traverse the membrane as a helical segment; the sequence is LPWILLGACFIGYVLPLIIILIC. Topologically, residues 216–241 are cytoplasmic; that stretch reads YSQICCKLFRTAKQNPLTEKSGVNKK. A helical transmembrane segment spans residues 242 to 265; the sequence is ALNTIILIIVVFVLCFTPYHVAII. Tyr-260 contributes to the 7alpha,25-dihydroxycholesterol binding site. Topologically, residues 266–287 are extracellular; that stretch reads QHMIKKLRFSNFLECSQRHSFQ. The helical transmembrane segment at 288 to 312 threads the bilayer; it reads ISLHFTVCLMNFNCCMDPFIYFFAC. Residues 313–361 are Cytoplasmic-facing; that stretch reads KGYKRKVMRMLKRQVSVSISSAVKSAPEENSREMTETQMMIHSKSSNGK. Residue Ser-328 is modified to Phosphoserine. The tract at residues 340-361 is disordered; it reads EENSREMTETQMMIHSKSSNGK. The span at 348-361 shows a compositional bias: polar residues; sequence ETQMMIHSKSSNGK.

Belongs to the G-protein coupled receptor 1 family. Homodimer and heterodimer. Heterodimerizes with CXCR5; leading to modulate the interaction between of CXCL13 and CXCR5. In terms of tissue distribution, expressed abundantly in lymphoid tissues such as spleen and lymph node, and in B- and T-lymphocytes. Also highly expressed in lung, heart and gastrointestinal tract, and weakly expressed in the urogenital system and brain. Expressed in astrocytes.

It localises to the cell membrane. In terms of biological role, G-protein coupled receptor expressed in lymphocytes that acts as a chemotactic receptor for B-cells, T-cells, splenic dendritic cells, monocytes/macrophages and astrocytes. Receptor for oxysterol 7-alpha,25-dihydroxycholesterol (7-alpha,25-OHC) and other related oxysterols. Mediates cell positioning and movement of a number of cells by binding the 7-alpha,25-OHC ligand that forms a chemotactic gradient. Binding of 7-alpha,25-OHC mediates the correct localization of B-cells during humoral immune responses. Guides B-cell movement along the B-cell zone-T-cell zone boundary and later to interfollicular and outer follicular regions. Its specific expression during B-cell maturation helps position B-cells appropriately for mounting T-dependent antibody responses. Collaborates with CXCR5 to mediate B-cell migration; probably by forming a heterodimer with CXCR5 that affects the interaction between of CXCL13 and CXCR5. Also acts as a chemotactic receptor for some T-cells upon binding to 7-alpha,25-OHC ligand. Promotes follicular helper T (Tfh) cells differentiation by positioning activated T-cells at the follicle-T-zone interface, promoting contact of newly activated CD4 T-cells with activated dendritic cells and exposing them to Tfh-cell-promoting inducible costimulator (ICOS) ligand. Expression in splenic dendritic cells is required for their homeostasis, localization and ability to induce B- and T-cell responses: GPR183 acts as a chemotactic receptor in dendritic cells that mediates the accumulation of CD4(+) dendritic cells in bridging channels. Regulates migration of astrocytes and is involved in communication between astrocytes and macrophages. Promotes osteoclast precursor migration to bone surfaces. Signals constitutively through G(i)-alpha, but not G(s)-alpha or G(q)-alpha. Signals constitutively also via MAPK1/3 (ERK1/2). The chain is G-protein coupled receptor 183 from Homo sapiens (Human).